Reading from the N-terminus, the 285-residue chain is HTH-type transcriptional regulator MurR (285 aa).

An HTH rpiR-type domain is found at Met1–Ser77. The H-T-H motif DNA-binding region spans Ser37 to Gln56. An SIS domain is found at Ile128–Glu279.

Homotetramer.

The protein operates within amino-sugar metabolism; N-acetylmuramate degradation [regulation]. In terms of biological role, represses the expression of the murPQ operon involved in the uptake and degradation of N-acetylmuramic acid (MurNAc). Binds to two adjacent inverted repeats within the operator region. MurNAc 6-phosphate, the substrate of MurQ, is the specific inducer that weakens binding of MurR to the operator. This chain is HTH-type transcriptional regulator MurR, found in Shigella boydii serotype 4 (strain Sb227).